Here is a 165-residue protein sequence, read N- to C-terminus: Endoribonuclease YbeY (165 aa).

The Zn(2+) site is built by histidine 130, histidine 134, and histidine 140.

Belongs to the endoribonuclease YbeY family. Zn(2+) serves as cofactor.

The protein localises to the cytoplasm. Its function is as follows. Single strand-specific metallo-endoribonuclease involved in late-stage 70S ribosome quality control and in maturation of the 3' terminus of the 16S rRNA. In Streptococcus thermophilus (strain CNRZ 1066), this protein is Endoribonuclease YbeY.